Reading from the N-terminus, the 533-residue chain is Peptide chain release factor 3 (533 aa).

The region spanning 11–284 (RRRRTFAIIS…ALVGLSPEPL (274 aa)) is the tr-type G domain. Residues 20–27 (SHPDAGKT), 92–96 (DTPGH), and 146–149 (NKLD) each bind GTP.

The protein belongs to the TRAFAC class translation factor GTPase superfamily. Classic translation factor GTPase family. PrfC subfamily.

It localises to the cytoplasm. In terms of biological role, increases the formation of ribosomal termination complexes and stimulates activities of RF-1 and RF-2. It binds guanine nucleotides and has strong preference for UGA stop codons. It may interact directly with the ribosome. The stimulation of RF-1 and RF-2 is significantly reduced by GTP and GDP, but not by GMP. This Ralstonia nicotianae (strain ATCC BAA-1114 / GMI1000) (Ralstonia solanacearum) protein is Peptide chain release factor 3.